The chain runs to 414 residues: MTSETDINKSASPTAAAKEQPEEPDGPLPGSASEQEKKVRFSPAIMSTKNSTDLVEYVDKGHSFLPAIPNTQRSQLEDRLNNQDRTIAFLLEQAFRIKEDISACLQGTHGFRKEESLARKLLENHIQTITSIVKKLSQNIEMIEEQIKARDLVATGTNFAVQDLSNKHLQGVGDLRGRVARCDSSIMKLSGDIHFIRNEHQQLEKTIQEMISSLQTVSKNLDTKVMQLLEKIEASSSEQISNLKMVQGDYRHEMNLLEFKFNSLSLNLYEEMENHQKRTENQLIKYEQEQLSRANQCLALLQEKLDMSEKNMEEKLLKLSSKLENFINTEKYEADLNKIKHTENKLSKKMSQLEKQIWDELEKMQDEYQSGFKSIHDSLNSLQRIQKTKMDLENYKVQKDLKKLQRKIAELQES.

Residues 1–13 show a composition bias toward polar residues; the sequence is MTSETDINKSASP. Residues 1–43 are disordered; sequence MTSETDINKSASPTAAAKEQPEEPDGPLPGSASEQEKKVRFSP. 4 coiled-coil regions span residues 70-94, 121-149, 188-223, and 266-414; these read NTQRSQLEDRLNNQDRTIAFLLEQA, LLENHIQTITSIVKKLSQNIEMIEEQIKA, KLSGDIHFIRNEHQQLEKTIQEMISSLQTVSKNLDT, and LNLY…LQES.

It belongs to the FAM81 family.

This is Protein FAM81B (FAM81B) from Bos taurus (Bovine).